A 183-amino-acid chain; its full sequence is Putative 3-methyladenine DNA glycosylase (183 aa).

Belongs to the DNA glycosylase MPG family.

The protein is Putative 3-methyladenine DNA glycosylase of Legionella pneumophila (strain Corby).